The following is a 345-amino-acid chain: L-threonine 3-dehydrogenase (345 aa).

Cys-42 lines the Zn(2+) pocket. Catalysis depends on charge relay system residues Thr-44 and His-47. Zn(2+) contacts are provided by His-67, Glu-68, Cys-97, Cys-100, Cys-103, and Cys-111. Residues Ile-179, Asp-199, Arg-204, 266–268, and 290–291 each bind NAD(+); these read LGI and IY.

The protein belongs to the zinc-containing alcohol dehydrogenase family. Homotetramer. Zn(2+) serves as cofactor.

The protein localises to the cytoplasm. The catalysed reaction is L-threonine + NAD(+) = (2S)-2-amino-3-oxobutanoate + NADH + H(+). Its pathway is amino-acid degradation; L-threonine degradation via oxydo-reductase pathway; glycine from L-threonine: step 1/2. Catalyzes the NAD(+)-dependent oxidation of L-threonine to 2-amino-3-ketobutyrate. The polypeptide is L-threonine 3-dehydrogenase (Rhizobium etli (strain CIAT 652)).